Consider the following 113-residue polypeptide: Death-associated protein-like 1.L (113 aa).

The interval 1–57 (MAKEQKMQSSPQALKAGHLPAVKAGGMRVSKKQGNEENSAPEKNAKKTLQEKPSSVL) is disordered.

Belongs to the DAP-DAPL1 family. In terms of assembly, associates with ribosomes; preventing translation. Interacts with eiF5a (eif5a and eif5a2); preventing translation.

Functionally, ribosome-binding protein that promotes ribosome hibernation, a process during which ribosomes are stabilized in an inactive state and preserved from proteasomal degradation. Acts via its association with eiF5a (eif5a and eif5a2) at the polypeptide exit tunnel of the ribosome, preventing mRNA translation. Plays a key role in ribosome hibernation in the mature egg by preventing mRNA translation, leading to ribosome inactivation. Ribosomes, which are produced in large quantities during oogenesis, are stored and translationally repressed in the egg and early embryo. This is Death-associated protein-like 1.L (dapl1.L) from Xenopus laevis (African clawed frog).